The primary structure comprises 292 residues: 4-hydroxy-tetrahydrodipicolinate synthase (292 aa).

Thr45 provides a ligand contact to pyruvate. Tyr133 acts as the Proton donor/acceptor in catalysis. Lys161 acts as the Schiff-base intermediate with substrate in catalysis. Ile203 contacts pyruvate.

The protein belongs to the DapA family. In terms of assembly, homotetramer; dimer of dimers.

Its subcellular location is the cytoplasm. The enzyme catalyses L-aspartate 4-semialdehyde + pyruvate = (2S,4S)-4-hydroxy-2,3,4,5-tetrahydrodipicolinate + H2O + H(+). Its pathway is amino-acid biosynthesis; L-lysine biosynthesis via DAP pathway; (S)-tetrahydrodipicolinate from L-aspartate: step 3/4. Its function is as follows. Catalyzes the condensation of (S)-aspartate-beta-semialdehyde [(S)-ASA] and pyruvate to 4-hydroxy-tetrahydrodipicolinate (HTPA). The chain is 4-hydroxy-tetrahydrodipicolinate synthase from Cronobacter sakazakii (strain ATCC BAA-894) (Enterobacter sakazakii).